Here is a 225-residue protein sequence, read N- to C-terminus: Ribonuclease T (225 aa).

Residues 1-21 (MSEDHFDEEHEGHGGGGGSRH) are disordered. In terms of domain architecture, Exonuclease spans 33–207 (VVVDVETGGF…YDTEKTAELF (175 aa)). 4 residues coordinate Mg(2+): Asp-36, Glu-38, His-194, and Asp-199. The active-site Proton donor/acceptor is His-194.

Belongs to the RNase T family. As to quaternary structure, homodimer. The cofactor is Mg(2+).

Trims short 3' overhangs of a variety of RNA species, leaving a one or two nucleotide 3' overhang. Responsible for the end-turnover of tRNA: specifically removes the terminal AMP residue from uncharged tRNA (tRNA-C-C-A). Also appears to be involved in tRNA biosynthesis. In Pseudomonas syringae pv. tomato (strain ATCC BAA-871 / DC3000), this protein is Ribonuclease T.